A 724-amino-acid chain; its full sequence is MMERKREMGIAYFARRIKQPRGIWVKMTFIVVLGLCFVFFWSFLSSSASTFNVQRESFDDIAEPVSSRTKSAHEVSESSKLHERGKVESGSKSKEGKKVGGSSVHKHETKKKKEHAVSHPHKKKDVPKPVVEEVVVKEDQEHEEAESDDSDQSNKEDGEEGTESDGNEGESDGNGDGSVDDSSASVDEEVEEKNEEVTVNEISKKRKRKGPVFDPKAEYSWRLCNTRSKHNYMPCIDNDGLIGRLQSYRHRERSCPKKPVMCLVPLPHDGYDPPVSWPESKSKILYKNVAHPKLAAYIKKHNWVNETGEYLSFPQNQTTFNGNVLQYLEFIQEMVPDIEWGKNVRIVLDIGCSDSSFVAALLDKDVLTVSLGLKDDLVDLAQVALERGFPTFVSSLASRRLPFPSGVFDTIHCAACGVHWHSHGGKLLLEMNRILRPNGYFILSSNNDKIEDDEAMTALTASICWNILAHKTEEASEMGVRIYQKPESNDIYELRRKKNPPLCEDNENPDAAWYVPMKTCIYEIPSAIEQHGAEWPEEWPKRLETYPEWLTSKEKAMEDTNHWNAMVNKSYLTGLGIDWLHIRNVMDMTAIYGGFGASLVKQNVWVMNVVPVHSPDTLPFIYERGLLGIYHDWCEPFGTYPRSYDLLHADHLFSRLKNRCKQPASIVVEMDRLTRPGGWVVVRDKVEILEPLEEILRSLHWEIRMTYAQDKEGMLCAQKTLWRP.

The Cytoplasmic portion of the chain corresponds to 1-22 (MMERKREMGIAYFARRIKQPRG). A helical; Signal-anchor for type II membrane protein transmembrane segment spans residues 23 to 43 (IWVKMTFIVVLGLCFVFFWSF). Residues 44–724 (LSSSASTFNV…LCAQKTLWRP (681 aa)) lie on the Lumenal side of the membrane. Positions 63-211 (EPVSSRTKSA…ISKKRKRKGP (149 aa)) are disordered. The span at 71-98 (SAHEVSESSKLHERGKVESGSKSKEGKK) shows a compositional bias: basic and acidic residues. Positions 107-125 (HETKKKKEHAVSHPHKKKD) are enriched in basic residues. Residues 126–140 (VPKPVVEEVVVKEDQ) show a composition bias toward basic and acidic residues. Residues 141 to 173 (EHEEAESDDSDQSNKEDGEEGTESDGNEGESDG) show a composition bias toward acidic residues. 3 N-linked (GlcNAc...) asparagine glycosylation sites follow: Asn-305, Asn-316, and Asn-568.

It belongs to the methyltransferase superfamily.

Its subcellular location is the golgi apparatus membrane. This is Probable methyltransferase PMT28 from Arabidopsis thaliana (Mouse-ear cress).